We begin with the raw amino-acid sequence, 397 residues long: MASEGITEIDSGLIESNYDNVVYKFDDLNLKPNIVRGIFGYGYETPSAIQQRAILPITEGRDVLAQAQSGTGKTATFTISALQRIDENEKSTQALILAPTRELALQIKNVITSIGLYLNVTVHASIGGTSMSDDIEAFKSGVQIVVGTPGRVFDMIERRYFRTDKVKMFILDEADEMLSSGFKEQIYNIFRLLPETTQVVLLSATMPQDVLEVTTKFMNNPVRILVKKDELTLEGIKQYFINVEVEDYKFDCLVDLYDSISVTQAVIFCNTRSKVEFLTNKLREQKFTVSAIHADLPQGERDTIMKEFRSGSSRILISTDLLARGIDVQQVSLVINYDLPANKENYIHRIGRGGRFGRKGVAINFVTDKDVGMMREIEKFYSTQITEMPADIGSLFA.

The Q motif signature appears at 23–51 (YKFDDLNLKPNIVRGIFGYGYETPSAIQQ). One can recognise a Helicase ATP-binding domain in the interval 54–224 (ILPITEGRDV…TKFMNNPVRI (171 aa)). 67–74 (AQSGTGKT) lines the ATP pocket. A DEAD box motif is present at residues 172 to 175 (DEAD). The Helicase C-terminal domain maps to 255–396 (DLYDSISVTQ…EMPADIGSLF (142 aa)).

The protein belongs to the DEAD box helicase family. eIF4A subfamily. In terms of assembly, component of the eIF4F complex, which composition varies with external and internal environmental conditions. It is composed of at least eIF4A, eIF4E and eIF4G.

It is found in the cytoplasm. The enzyme catalyses ATP + H2O = ADP + phosphate + H(+). Functionally, ATP-dependent RNA helicase which is a subunit of the eIF4F complex involved in cap recognition and is required for mRNA binding to ribosome. In the current model of translation initiation, eIF4A unwinds RNA secondary structures in the 5'-UTR of mRNAs which is necessary to allow efficient binding of the small ribosomal subunit, and subsequent scanning for the initiator codon. The sequence is that of ATP-dependent RNA helicase eIF4A (TIF1) from Lodderomyces elongisporus (strain ATCC 11503 / CBS 2605 / JCM 1781 / NBRC 1676 / NRRL YB-4239) (Yeast).